Here is a 376-residue protein sequence, read N- to C-terminus: UPF0754 membrane protein Sca_1420 (376 aa).

2 helical membrane passes run 4–24 (FLVI…TNII) and 356–376 (LLGF…ALFV).

Belongs to the UPF0754 family.

Its subcellular location is the cell membrane. This Staphylococcus carnosus (strain TM300) protein is UPF0754 membrane protein Sca_1420.